Reading from the N-terminus, the 334-residue chain is Glycerol-3-phosphate dehydrogenase [NAD(P)+] (334 aa).

Residues tryptophan 13, arginine 33, and lysine 106 each contribute to the NADPH site. Positions 106, 137, and 139 each coordinate sn-glycerol 3-phosphate. Residue alanine 141 coordinates NADPH. Lysine 192, aspartate 245, serine 255, arginine 256, and asparagine 257 together coordinate sn-glycerol 3-phosphate. Lysine 192 functions as the Proton acceptor in the catalytic mechanism. NADPH is bound at residue arginine 256. NADPH is bound by residues valine 280 and glutamate 282.

Belongs to the NAD-dependent glycerol-3-phosphate dehydrogenase family.

The protein resides in the cytoplasm. It catalyses the reaction sn-glycerol 3-phosphate + NAD(+) = dihydroxyacetone phosphate + NADH + H(+). The catalysed reaction is sn-glycerol 3-phosphate + NADP(+) = dihydroxyacetone phosphate + NADPH + H(+). It functions in the pathway membrane lipid metabolism; glycerophospholipid metabolism. Functionally, catalyzes the reduction of the glycolytic intermediate dihydroxyacetone phosphate (DHAP) to sn-glycerol 3-phosphate (G3P), the key precursor for phospholipid synthesis. The polypeptide is Glycerol-3-phosphate dehydrogenase [NAD(P)+] (Chlamydia muridarum (strain MoPn / Nigg)).